A 306-amino-acid chain; its full sequence is tRNA pseudouridine synthase B (306 aa).

The active-site Nucleophile is the aspartate 51.

Belongs to the pseudouridine synthase TruB family. Type 1 subfamily.

The catalysed reaction is uridine(55) in tRNA = pseudouridine(55) in tRNA. Functionally, responsible for synthesis of pseudouridine from uracil-55 in the psi GC loop of transfer RNAs. In Nocardia farcinica (strain IFM 10152), this protein is tRNA pseudouridine synthase B.